The sequence spans 214 residues: tRNA (guanine-N(7)-)-methyltransferase (214 aa).

Positions 44, 69, 96, and 118 each coordinate S-adenosyl-L-methionine. Residue aspartate 118 is part of the active site. Residues lysine 122, aspartate 154, and 191 to 194 (TEYE) contribute to the substrate site.

The protein belongs to the class I-like SAM-binding methyltransferase superfamily. TrmB family.

The catalysed reaction is guanosine(46) in tRNA + S-adenosyl-L-methionine = N(7)-methylguanosine(46) in tRNA + S-adenosyl-L-homocysteine. Its pathway is tRNA modification; N(7)-methylguanine-tRNA biosynthesis. In terms of biological role, catalyzes the formation of N(7)-methylguanine at position 46 (m7G46) in tRNA. The polypeptide is tRNA (guanine-N(7)-)-methyltransferase (Listeria welshimeri serovar 6b (strain ATCC 35897 / DSM 20650 / CCUG 15529 / CIP 8149 / NCTC 11857 / SLCC 5334 / V8)).